We begin with the raw amino-acid sequence, 107 residues long: Putative double-stranded DNA mimic protein Asuc_1259 (107 aa).

This sequence belongs to the putative dsDNA mimic protein family.

Its function is as follows. May act as a double-stranded DNA (dsDNA) mimic. Probably regulates the activity of a dsDNA-binding protein. The chain is Putative double-stranded DNA mimic protein Asuc_1259 from Actinobacillus succinogenes (strain ATCC 55618 / DSM 22257 / CCUG 43843 / 130Z).